A 53-amino-acid polypeptide reads, in one-letter code: UPF0391 membrane protein Bcen2424_6479 (53 aa).

2 helical membrane-spanning segments follow: residues 5–25 (AIIF…GIAA) and 30–50 (IAKI…LLGV).

The protein belongs to the UPF0391 family.

It localises to the cell membrane. In Burkholderia cenocepacia (strain HI2424), this protein is UPF0391 membrane protein Bcen2424_6479.